The chain runs to 121 residues: Small ribosomal subunit protein bS16 (121 aa).

Over residues Leu97–Ser114 the composition is skewed to basic and acidic residues. The tract at residues Leu97 to Thr121 is disordered.

The protein belongs to the bacterial ribosomal protein bS16 family.

In Prochlorococcus marinus (strain MIT 9301), this protein is Small ribosomal subunit protein bS16.